We begin with the raw amino-acid sequence, 617 residues long: Electron transfer flavoprotein-ubiquinone oxidoreductase, mitochondrial (617 aa).

The transit peptide at 1–33 directs the protein to the mitochondrion; that stretch reads MQVLLARLACPVYQCFHAIKIKKNYLPLCATRW. Position 71–85 (71–85) interacts with FAD; it reads VVIVGAGPAGLSAAA. N6-acetyllysine is present on Lys96. Residues 109-130 lie within the membrane without spanning it; that stretch reads IGAHTLSGACLDPRALQELFPD. 2 positions are modified to N6-acetyllysine: Lys132 and Lys223. Residues Gly305 and Gly306 each contribute to the a ubiquinone site. Lys357 carries the post-translational modification N6-acetyllysine. An intramembrane segment occupies 428–447; it reads IGLDVTEYEDNLKKSWVWKE. Ser551 carries the post-translational modification Phosphoserine. The [4Fe-4S] cluster site is built by Cys561, Cys586, Cys589, and Cys592. Positions 577-606 constitute a 4Fe-4S ferredoxin-type domain; that stretch reads FRLQINAQNCVHCKTCDIKDPSQNINWVVP.

It belongs to the ETF-QO/FixC family. Monomer. [4Fe-4S] cluster serves as cofactor. The cofactor is FAD.

Its subcellular location is the mitochondrion inner membrane. It catalyses the reaction a ubiquinone + reduced [electron-transfer flavoprotein] = a ubiquinol + oxidized [electron-transfer flavoprotein] + H(+). Accepts electrons from ETF and reduces ubiquinone. The protein is Electron transfer flavoprotein-ubiquinone oxidoreductase, mitochondrial (ETFDH) of Bos taurus (Bovine).